The sequence spans 340 residues: MANKNAYAQSGVDVEAGYEVVERIKKHVARTERAGVMGALGGFGGMFDLSKTGVKEPVLISGTDGVGTKLMLAIKYDKHDTIGQDCVAMCVNDIIAAGAEPLYFLDYVATGKNEPAKLEQVVAGVAEGCVQAGAALIGGETAEMPGMYGEDDYDLAGFAVGVAEKSQIIDGSKVVEGDVLLGLASSGIHSNGYSLVRRVFADYTGEEVLPELEGKKLKEVLLEPTRIYVKAVLPLIKEELVNGIAHITGGGFIENVPRMFADDLAAEIDESKVPVLPIFKTLEKYGQIKHEEMFEIFNMGVGLMLAVSPENVERVKELLDEAVYEIGRIVKKENESVIIK.

This sequence belongs to the AIR synthase family.

Its subcellular location is the cytoplasm. The catalysed reaction is 2-formamido-N(1)-(5-O-phospho-beta-D-ribosyl)acetamidine + ATP = 5-amino-1-(5-phospho-beta-D-ribosyl)imidazole + ADP + phosphate + H(+). Its pathway is purine metabolism; IMP biosynthesis via de novo pathway; 5-amino-1-(5-phospho-D-ribosyl)imidazole from N(2)-formyl-N(1)-(5-phospho-D-ribosyl)glycinamide: step 2/2. This is Phosphoribosylformylglycinamidine cyclo-ligase from Streptococcus pneumoniae serotype 4 (strain ATCC BAA-334 / TIGR4).